Here is a 408-residue protein sequence, read N- to C-terminus: LL-diaminopimelate aminotransferase (408 aa).

Residues Tyr15 and Gly42 each coordinate substrate. Residues Tyr72, 108 to 109 (SK), Tyr132, Asn187, Tyr218, and 246 to 248 (SFS) each bind pyridoxal 5'-phosphate. Positions 109, 132, and 187 each coordinate substrate. N6-(pyridoxal phosphate)lysine is present on Lys249. 2 residues coordinate pyridoxal 5'-phosphate: Arg257 and Asn292. Residues Asn292 and Arg388 each coordinate substrate.

The protein belongs to the class-I pyridoxal-phosphate-dependent aminotransferase family. LL-diaminopimelate aminotransferase subfamily. As to quaternary structure, homodimer. Pyridoxal 5'-phosphate serves as cofactor.

The catalysed reaction is (2S,6S)-2,6-diaminopimelate + 2-oxoglutarate = (S)-2,3,4,5-tetrahydrodipicolinate + L-glutamate + H2O + H(+). The protein operates within amino-acid biosynthesis; L-lysine biosynthesis via DAP pathway; LL-2,6-diaminopimelate from (S)-tetrahydrodipicolinate (aminotransferase route): step 1/1. Its function is as follows. Involved in the synthesis of meso-diaminopimelate (m-DAP or DL-DAP), required for both lysine and peptidoglycan biosynthesis. Catalyzes the direct conversion of tetrahydrodipicolinate to LL-diaminopimelate. The polypeptide is LL-diaminopimelate aminotransferase (Prochlorococcus marinus (strain SARG / CCMP1375 / SS120)).